Consider the following 155-residue polypeptide: MRRRRAERRQIPPDPVYGDVLVAKLINKVMWDGKKTIAQKIVYGAFDIIKEKMKKDPLEVFRQAVENVKPVLEVRPRRVGGATYQVPIEVQEPRRTSLAIRWIVEAARAKKGRPMKEKLAEEIMAAYNNTGTAIKKKEDTHRMAEANRAFAHYRW.

It belongs to the universal ribosomal protein uS7 family. As to quaternary structure, part of the 30S ribosomal subunit. Contacts proteins S9 and S11.

In terms of biological role, one of the primary rRNA binding proteins, it binds directly to 16S rRNA where it nucleates assembly of the head domain of the 30S subunit. Is located at the subunit interface close to the decoding center, probably blocks exit of the E-site tRNA. This Thermotoga neapolitana (strain ATCC 49049 / DSM 4359 / NBRC 107923 / NS-E) protein is Small ribosomal subunit protein uS7.